The following is a 448-amino-acid chain: ATP-dependent RNA helicase sub2 (448 aa).

Low complexity predominate over residues 19-29 (DAAATTAAPAA). Residues 19–43 (DAAATTAAPAANGAQDKKGDLTVSG) form a disordered region. The Q motif signature appears at 58–86 (TGFRDFLLKGELLRAITDCGFEHPSEVQQ). One can recognise a Helicase ATP-binding domain in the interval 89 to 271 (IPTAILNVDV…KKFMRNPLEV (183 aa)). Position 102-109 (102-109 (AKSGLGKT)) interacts with ATP. Positions 211–214 (DECD) match the DECD box motif. The Helicase C-terminal domain occupies 283–444 (GLQQYYIKLS…EYPEGGVDSS (162 aa)).

It belongs to the DEAD box helicase family. DECD subfamily.

Its subcellular location is the nucleus. It carries out the reaction ATP + H2O = ADP + phosphate + H(+). Functionally, ATP-binding RNA helicase involved in transcription elongation and required for the export of mRNA out of the nucleus. SUB2 also plays a role in pre-mRNA splicing and spliceosome assembly. May be involved in rDNA and telomeric silencing, and maintenance of genome integrity. This is ATP-dependent RNA helicase sub2 (sub2) from Aspergillus fumigatus (strain ATCC MYA-4609 / CBS 101355 / FGSC A1100 / Af293) (Neosartorya fumigata).